A 585-amino-acid polypeptide reads, in one-letter code: Probable phosphoglucomutase, cytoplasmic 2 (585 aa).

The segment at 1–20 (MVSFKVSLVSTSPIDGQKPG) is disordered. Alpha-D-glucose 1,6-bisphosphate-binding residues include arginine 25 and serine 124. The active-site Phosphoserine intermediate is serine 124. Mg(2+)-binding residues include serine 124, aspartate 301, aspartate 303, and aspartate 305. The residue at position 124 (serine 124) is a Phosphoserine. Positions 305, 306, 369, 388, 390, and 401 each coordinate alpha-D-glucose 1,6-bisphosphate.

This sequence belongs to the phosphohexose mutase family. In terms of assembly, monomer. Mg(2+) is required as a cofactor.

It localises to the cytoplasm. The catalysed reaction is alpha-D-glucose 1-phosphate = alpha-D-glucose 6-phosphate. It catalyses the reaction O-phospho-L-seryl-[protein] + alpha-D-glucose 1-phosphate = alpha-D-glucose 1,6-bisphosphate + L-seryl-[protein]. The enzyme catalyses alpha-D-glucose 1,6-bisphosphate + L-seryl-[protein] = O-phospho-L-seryl-[protein] + alpha-D-glucose 6-phosphate. Catalyzes the reversible isomerization of alpha-D-glucose 1-phosphate to alpha-D-glucose 6-phosphate. The mechanism proceeds via the intermediate compound alpha-D-glucose 1,6-bisphosphate. This enzyme participates in both the breakdown and synthesis of glucose. The chain is Probable phosphoglucomutase, cytoplasmic 2 from Arabidopsis thaliana (Mouse-ear cress).